The sequence spans 727 residues: Synaptic vesicle glycoprotein 2C (727 aa).

The tract at residues 1-57 is interaction with SYT1; sequence MEDSYKDRTSLMKGAKDIAKEVKKQTVKKVNQAVDRAQDEYTQRSYSRFQDEDDDDD. Residues 1–154 lie on the Cytoplasmic side of the membrane; that stretch reads MEDSYKDRTS…CGHGRFQWAL (154 aa). The segment at 22 to 120 is disordered; the sequence is VKKQTVKKVN…QPKGDEYKDR (99 aa). Residues S75 and S76 each carry the phosphoserine modification. Position 79 is a phosphothreonine (T79). The chain crosses the membrane as a helical span at residues 155–175; sequence FFVLGMALMADGVEVFVVGFV. Topologically, residues 176–191 are extracellular; that stretch reads LPSAETDLCIPNSGSG. Residues 192–212 form a helical membrane-spanning segment; that stretch reads WLGSIVYLGMMVGAFFWGGLA. Topologically, residues 213 to 226 are cytoplasmic; sequence DKVGRKQSLLICMS. The helical transmembrane segment at 227–247 threads the bilayer; the sequence is VNGFFAFLSSFVQGYGFFLLC. R248 is a topological domain (extracellular). The helical transmembrane segment at 249–269 threads the bilayer; it reads LLSGFGIGGAIPTVFSYFAEV. Residues 270-280 are Cytoplasmic-facing; that stretch reads LAREKRGEHLS. A helical membrane pass occupies residues 281–301; sequence WLCMFWMIGGIYASAMAWAII. At 302-320 the chain is on the extracellular side; that stretch reads PHYGWSFSMGSAYQFHSWR. A helical transmembrane segment spans residues 321-341; the sequence is VFVIVCALPCVSSVVALTFMP. The Cytoplasmic segment spans residues 342 to 437; sequence ESPRFLLEVG…PVRENTIKLT (96 aa). Residues 438 to 458 form a helical membrane-spanning segment; that stretch reads IVWFTLSFGYYGLSVWFPDVI. Residues 459–578 lie on the Extracellular side of the membrane; that stretch reads KHLQSDEYAL…CQITFDDDYS (120 aa). Y466 is subject to Phosphotyrosine. N-linked (GlcNAc...) asparagine glycosylation is found at N480, N484, N534, N559, and N565. Residues 529-566 are (Microbial infection) C.botulinum neurotoxin type A-binding; it reads NTYFKNCTFIDTLFENTDFEPYKFIDSEFQNCSFLHNK. The helical transmembrane segment at 579-599 threads the bilayer; sequence AYWIYFVNFLGTLAVLPGNIV. Topologically, residues 600-609 are cytoplasmic; sequence SALLMDRIGR. A helical membrane pass occupies residues 610-630; sequence LTMLGGSMVLSGISCFFLWFG. The Extracellular portion of the chain corresponds to 631 to 636; sequence TSESMM. A helical membrane pass occupies residues 637–657; it reads IGMLCLYNGLTISAWNSLDVV. Over 658–670 the chain is Cytoplasmic; that stretch reads TVELYPTDRRATG. The chain crosses the membrane as a helical span at residues 671–693; it reads FGFLNALCKAAAVLGNLIFGSLV. Topologically, residues 694 to 697 are extracellular; the sequence is SITK. A helical transmembrane segment spans residues 698 to 716; sequence AIPILLASTVLVCGGLVGL. The Cytoplasmic portion of the chain corresponds to 717–727; the sequence is RLPDTRTQVLM.

Belongs to the major facilitator superfamily. Interacts with SYT1 in a calcium-dependent manner. In terms of assembly, (Microbial infection) Interacts with C.botulinum neurotoxin type A (BoNT/A, botA). As to quaternary structure, (Microbial infection) Interacts with C.botulinum neurotoxin type F (BoNT/F). Interaction requires glycosylation of SV2 proteins. Post-translationally, N-glycosylated. Expressed at high levels in very few brain areas including the striatum, midbrain and hindbrain, and in the olfactory bulb. Expressed at lower levels in cerebrum, hippocampus and cerebellum (at protein level). Mainly expressed in brain; also detected in lung, liver, kidney.

Its subcellular location is the cytoplasmic vesicle. The protein localises to the secretory vesicle. It localises to the synaptic vesicle membrane. Functionally, plays a role in the control of regulated secretion in neural and endocrine cells, enhancing selectively low-frequency neurotransmission. Positively regulates vesicle fusion by maintaining the readily releasable pool of secretory vesicles. In terms of biological role, (Microbial infection) Receptor for C.botulinum neurotoxin type A (BoNT/A, botA); the toxin binds Sv2c via extracellular loop 4. Restores uptake of BoNT/A in rat cells that are deleted for SV2 receptor. (Microbial infection) Possible receptor for C.botulinum neurotoxin type D (BoNT/D, botD); BoNT/D does not bind to extracellular loop 4 as do BoNT/A and BoNT/E. Another group does not find a convincing interaction with SV2. Its function is as follows. (Microbial infection) Receptor for C.botulinum neurotoxin type F (BoNT/F); binding requires glycosylation of Asn-573. The polypeptide is Synaptic vesicle glycoprotein 2C (Sv2c) (Rattus norvegicus (Rat)).